A 501-amino-acid polypeptide reads, in one-letter code: Glycerol kinase (501 aa).

T12 serves as a coordination point for ADP. T12, T13, and S14 together coordinate ATP. A sn-glycerol 3-phosphate-binding site is contributed by T12. An ADP-binding site is contributed by R16. Sn-glycerol 3-phosphate is bound by residues R82, E83, Y134, and D244. Glycerol contacts are provided by R82, E83, Y134, D244, and Q245. T266 and G310 together coordinate ADP. 4 residues coordinate ATP: T266, G310, Q314, and G411. Residues G411 and N415 each coordinate ADP.

It belongs to the FGGY kinase family.

The catalysed reaction is glycerol + ATP = sn-glycerol 3-phosphate + ADP + H(+). The protein operates within polyol metabolism; glycerol degradation via glycerol kinase pathway; sn-glycerol 3-phosphate from glycerol: step 1/1. Inhibited by fructose 1,6-bisphosphate (FBP). Key enzyme in the regulation of glycerol uptake and metabolism. Catalyzes the phosphorylation of glycerol to yield sn-glycerol 3-phosphate. In Methylorubrum populi (strain ATCC BAA-705 / NCIMB 13946 / BJ001) (Methylobacterium populi), this protein is Glycerol kinase.